Reading from the N-terminus, the 2238-residue chain is RNA-directed RNA polymerase L (2238 aa).

The segment at 26 to 284 (ITLVTCQNDA…THHSEHPVDC (259 aa)) is endonuclease. Mn(2+)-binding residues include E51, D89, and E102. Residue K115 is part of the active site. A RdRp catalytic domain is found at 1188-1387 (TDMKMCVNLG…FISTKFNKFV (200 aa)). Residue D1346 participates in Mg(2+) binding.

This sequence belongs to the Bunyavirales RNA polymerase family. As to quaternary structure, homomultimer; the oligomeric structure is essential for the polymerase activity. Interacts with nucleoprotein N. Interacts with protein Z; this interaction inhibits viral transcription and replication, Z partially blocks the product exit tunnel for the releasing nascent RNA product. It depends on Mn(2+) as a cofactor. Requires Mg(2+) as cofactor.

It localises to the virion. It is found in the host cytoplasm. It catalyses the reaction RNA(n) + a ribonucleoside 5'-triphosphate = RNA(n+1) + diphosphate. Functionally, RNA-dependent RNA polymerase, which is responsible for the replication and transcription of the viral RNA genome using antigenomic RNA as an intermediate. During transcription, synthesizes subgenomic RNAs and assures their capping by a cap-snatching mechanism, which involves the endonuclease activity cleaving the host capped pre-mRNAs. These short capped RNAs are then used as primers for viral transcription. The 3'-end of subgenomic mRNAs molecules are heterogeneous and not polyadenylated. The replicase function is to direct synthesis of antigenomic and genomic RNA which are encapsidated and non capped. As a consequence of the use of the same enzyme for both transcription and replication, these mechanisms need to be well coordinated. These processes may be regulated by proteins N and Z in a dose-dependent manner. Z protein inhibits the viral polymerase L und thus the viral transcription and RNA synthesis. The protein is RNA-directed RNA polymerase L of Calomys callosus (Large vesper mouse).